Reading from the N-terminus, the 115-residue chain is Probable non-functional T cell receptor beta variable 23-1 (115 aa).

Residues 1–21 (MGTRLLGCAALCLLAADSFHA) form the signal peptide. The Ig-like domain maps to 22-115 (KVTQTPGHLV…TALYLCASSQ (94 aa)). Residues Cys42 and Cys111 are joined by a disulfide bond.

As to quaternary structure, alpha-beta TR is a heterodimer composed of an alpha and beta chain; disulfide-linked. The alpha-beta TR is associated with the transmembrane signaling CD3 coreceptor proteins to form the TR-CD3 (TcR or TCR). The assembly of alpha-beta TR heterodimers with CD3 occurs in the endoplasmic reticulum where a single alpha-beta TR heterodimer associates with one CD3D-CD3E heterodimer, one CD3G-CD3E heterodimer and one CD247 homodimer forming a stable octameric structure. CD3D-CD3E and CD3G-CD3E heterodimers preferentially associate with TR alpha and TR beta chains, respectively. The association of the CD247 homodimer is the last step of TcR assembly in the endoplasmic reticulum and is required for transport to the cell surface.

It is found in the cell membrane. Probable non-functional open reading frame (ORF) of V region of the variable domain of T cell receptor (TR) beta chain. Non-functional ORF generally cannot participate in the synthesis of a productive T cell receptor (TR) chain due to altered V-(D)-J or switch recombination and/or splicing site (at mRNA level) and/or conserved amino acid change (protein level). Alpha-beta T cell receptors are antigen specific receptors which are essential to the immune response and are present on the cell surface of T lymphocytes. Recognize peptide-major histocompatibility (MH) (pMH) complexes that are displayed by antigen presenting cells (APC), a prerequisite for efficient T cell adaptive immunity against pathogens. Binding of alpha-beta TR to pMH complex initiates TR-CD3 clustering on the cell surface and intracellular activation of LCK that phosphorylates the ITAM motifs of CD3G, CD3D, CD3E and CD247 enabling the recruitment of ZAP70. In turn ZAP70 phosphorylates LAT, which recruits numerous signaling molecules to form the LAT signalosome. The LAT signalosome propagates signal branching to three major signaling pathways, the calcium, the mitogen-activated protein kinase (MAPK) kinase and the nuclear factor NF-kappa-B (NF-kB) pathways, leading to the mobilization of transcription factors that are critical for gene expression and essential for T cell growth and differentiation. The T cell repertoire is generated in the thymus, by V-(D)-J rearrangement. This repertoire is then shaped by intrathymic selection events to generate a peripheral T cell pool of self-MH restricted, non-autoaggressive T cells. Post-thymic interaction of alpha-beta TR with the pMH complexes shapes TR structural and functional avidity. The chain is Probable non-functional T cell receptor beta variable 23-1 from Homo sapiens (Human).